A 138-amino-acid chain; its full sequence is Vesicle transport protein GOT1B (138 aa).

An N-acetylmethionine modification is found at methionine 1. Residues 1–9 (MISLTDTQK) lie on the Cytoplasmic side of the membrane. Residues 10–30 (IGMGLTGFGVFFLFFGMILFF) traverse the membrane as a helical segment. Topologically, residues 31–32 (DK) are lumenal. The chain crosses the membrane as a helical span at residues 33 to 53 (ALLAIGNVLFVAGLAFVIGLE). Topologically, residues 54-68 (RTFRFFFQKHKMKAT) are cytoplasmic. A helical transmembrane segment spans residues 69 to 89 (GFFLGGVFVVLIGWPLIGMIF). A topological domain (lumenal) is located at residue glutamate 90. Residues 91-109 (IYGFFLLFRGFFPVVVGFI) form a helical membrane-spanning segment. Over 110–138 (RRVPVLGSLLNLPGIRSFVDKVGESNNMV) the chain is Cytoplasmic.

It belongs to the GOT1 family.

Its subcellular location is the golgi apparatus membrane. In terms of biological role, may be involved in fusion of ER-derived transport vesicles with the Golgi complex. In Bos taurus (Bovine), this protein is Vesicle transport protein GOT1B.